The following is a 243-amino-acid chain: R-spondin-2 (243 aa).

The N-terminal stretch at 1-23 is a signal peptide; it reads MRFCLFSFALIILNCMDYSQCQG. 11 disulfides stabilise this stretch: Cys40–Cys46, Cys43–Cys52, Cys55–Cys74, Cys78–Cys93, Cys96–Cys104, Cys101–Cys110, Cys113–Cys124, Cys128–Cys141, Cys145–Cys187, Cys156–Cys163, and Cys196–Cys203. One copy of the FU repeat lies at 90–134; sequence MNRCARCRIENCDSCFSKDFCTKCKVGFYLHRGRCFDECPDGFAP. One can recognise a TSP type-1 domain in the interval 144-204; it reads GCEVGHWSEW…RCKMAMRHCP (61 aa). N-linked (GlcNAc...) asparagine glycosylation is present at Asn160. Residues 204 to 224 are compositionally biased toward basic residues; that stretch reads PGGKRTPKAKEKRNKKKRRKL. The tract at residues 204–243 is disordered; the sequence is PGGKRTPKAKEKRNKKKRRKLIERAQEQHSVFLATDRVNQ.

This sequence belongs to the R-spondin family. As to quaternary structure, interacts with WNT1. Binds heparin. Interacts with LGR4, LGR5 and LGR6.

It is found in the secreted. Its function is as follows. Activator of the canonical Wnt signaling pathway by acting as a ligand for LGR4-6 receptors. Upon binding to LGR4-6 (LGR4, LGR5 or LGR6), LGR4-6 associate with phosphorylated LRP6 and frizzled receptors that are activated by extracellular Wnt receptors, triggering the canonical Wnt signaling pathway to increase expression of target genes. Also regulates the canonical Wnt/beta-catenin-dependent pathway and non-canonical Wnt signaling by acting as an inhibitor of ZNRF3, an important regulator of the Wnt signaling pathway. Probably also acts as a ligand for frizzled and LRP receptors. During embryonic development, plays a crucial role in limb specification, amplifying the Wnt signaling pathway independently of LGR4-6 receptors, possibly by acting as a direct antagonistic ligand to RNF43 and ZNRF3, hence governing the number of limbs an embryo should form. The sequence is that of R-spondin-2 (Rspo2) from Mus musculus (Mouse).